Here is a 166-residue protein sequence, read N- to C-terminus: Regulator of ribonuclease activity A (166 aa).

This sequence belongs to the RraA family. Homotrimer. Binds to both RNA-binding sites in the C-terminal region of Rne and to RhlB.

The protein resides in the cytoplasm. Its function is as follows. Globally modulates RNA abundance by binding to RNase E (Rne) and regulating its endonucleolytic activity. Can modulate Rne action in a substrate-dependent manner by altering the composition of the degradosome. Modulates RNA-binding and helicase activities of the degradosome. In Histophilus somni (strain 129Pt) (Haemophilus somnus), this protein is Regulator of ribonuclease activity A.